The following is a 476-amino-acid chain: Dihydrolipoyl dehydrogenase (476 aa).

FAD-binding positions include 36-45 (EHQERLGGVC), K54, and A117. A disulfide bridge links C45 with C50. NAD(+) is bound by residues 182 to 186 (GGGII), D205, V238, and 271 to 274 (AIGR). Residues D314 and A322 each coordinate FAD. H446 functions as the Proton acceptor in the catalytic mechanism.

Belongs to the class-I pyridine nucleotide-disulfide oxidoreductase family. As to quaternary structure, homodimer. FAD is required as a cofactor.

It is found in the cytoplasm. The enzyme catalyses N(6)-[(R)-dihydrolipoyl]-L-lysyl-[protein] + NAD(+) = N(6)-[(R)-lipoyl]-L-lysyl-[protein] + NADH + H(+). In terms of biological role, lipoamide dehydrogenase is a component of the alpha-ketoacid dehydrogenase complexes. This Buchnera aphidicola subsp. Schizaphis graminum (strain Sg) protein is Dihydrolipoyl dehydrogenase (lpdA).